Reading from the N-terminus, the 977-residue chain is Dynamin-like GTPase OPA1, mitochondrial (977 aa).

Residues Met-1–Asn-86 constitute a mitochondrion transit peptide. Residues Phe-87–Arg-95 are Mitochondrial matrix-facing. The helical transmembrane segment at Leu-96–Tyr-112 threads the bilayer. The Mitochondrial intermembrane segment spans residues Thr-113–Asp-787. Positions Lys-224–Gly-271 form a coiled coil. One can recognise a Dynamin-type G domain in the interval Gln-302–Glu-578. The tract at residues Gly-312 to Thr-319 is G1 motif. Ser-315, Gly-317, Lys-318, Thr-319, Ser-320, and Gly-334 together coordinate GTP. Residue Thr-319 participates in Mg(2+) binding. A G2 motif region spans residues Met-338–Arg-341. Mg(2+) contacts are provided by Thr-340 and Asp-415. Residues Asp-415–Gly-418 are G3 motif. A G4 motif region spans residues Thr-484–Asp-487. Positions 485, 487, and 520 each coordinate GTP. Residues Val-518–Gly-521 are G5 motif. Stalk region stretches follow at residues Asp-606–Thr-853 and Cys-891–Leu-945. The tract at residues Ser-753–Cys-873 is paddle region. Residues Trp-788–Arg-798 lie within the membrane without spanning it. Over Thr-799–Lys-977 the chain is Mitochondrial intermembrane. Cysteines 873 and 891 form a disulfide. Positions Leu-911–Lys-977 form a coiled coil.

Belongs to the TRAFAC class dynamin-like GTPase superfamily. Dynamin/Fzo/YdjA family. In terms of assembly, oligomeric complex consisting of membrane-bound and soluble forms of OPA1. In terms of processing, cleaved by OMA1 or YME1L downstream of the transmembrane region in response to different signals to generate soluble forms. Cleaved by OMA1 at position S1 following stress conditions, generating the short soluble form (Dynamin-like GTPase OPA1, short form; S-OPA1).

Its subcellular location is the mitochondrion inner membrane. The protein resides in the mitochondrion intermembrane space. It catalyses the reaction GTP + H2O = GDP + phosphate + H(+). Dynamin-related GTPase that is essential for normal mitochondrial morphology by mediating fusion of the mitochondrial inner membranes, regulating cristae morphology and maintaining respiratory chain function. Exists in two forms: the transmembrane, long form (Dynamin-like GTPase OPA1, long form; L-OPA1), which is tethered to the inner mitochondrial membrane, and the short soluble form (Dynamin-like GTPase OPA1, short form; S-OPA1), which results from proteolytic cleavage and localizes in the intermembrane space. Both forms (L-OPA1 and S-OPA1) cooperate to catalyze the fusion of the mitochondrial inner membrane. The equilibrium between L-OPA1 and S-OPA1 is essential: excess levels of S-OPA1, produced by cleavage by OMA1 following loss of mitochondrial membrane potential, lead to an impaired equilibrium between L-OPA1 and S-OPA1, inhibiting mitochondrial fusion. The balance between L-OPA1 and S-OPA1 also influences cristae shape and morphology. Its role in mitochondrial morphology is required for mitochondrial genome maintenance. Its function is as follows. Constitutes the transmembrane long form (L-OPA1) that plays a central role in mitochondrial inner membrane fusion and cristae morphology. L-OPA1 and the soluble short form (S-OPA1) form higher-order helical assemblies that coordinate the fusion of mitochondrial inner membranes. Inner membrane-anchored L-OPA1 molecules initiate membrane remodeling by recruiting soluble S-OPA1 to rapidly polymerize into a flexible cylindrical scaffold encaging the mitochondrial inner membrane. Once at the membrane surface, the formation of S-OPA1 helices induce bilayer curvature. OPA1 dimerization through the paddle region, which inserts into cardiolipin-containing membrane, promotes GTP hydrolysis and the helical assembly of a flexible OPA1 lattice on the membrane, which drives membrane curvature and mitochondrial fusion. Plays a role in the maintenance and remodeling of mitochondrial cristae, some invaginations of the mitochondrial inner membrane that provide an increase in the surface area. Probably acts by forming helical filaments at the inside of inner membrane tubes with the shape and dimensions of crista junctions. In terms of biological role, constitutes the soluble short form (S-OPA1) generated by cleavage by OMA1, which plays a central role in mitochondrial inner membrane fusion and cristae morphology. The transmembrane long form (L-OPA1) and the S-OPA1 form higher-order helical assemblies that coordinate the fusion of mitochondrial inner membranes. Inner membrane-anchored L-OPA1 molecules initiate membrane remodeling by recruiting soluble S-OPA1 to rapidly polymerize into a flexible cylindrical scaffold encaging the mitochondrial inner membrane. Once at the membrane surface, the formation of S-OPA1 helices induce bilayer curvature. OPA1 dimerization through the paddle region, which inserts into cardiolipin-containing membrane, promotes GTP hydrolysis and the helical assembly of a flexible OPA1 lattice on the membrane, which drives membrane curvature and mitochondrial fusion. Excess levels of S-OPA1 produced by cleavage by OMA1 following stress conditions that induce loss of mitochondrial membrane potential, lead to an impaired equilibrium between L-OPA1 and S-OPA1, thereby inhibiting mitochondrial fusion. Plays a role in the maintenance and remodeling of mitochondrial cristae, some invaginations of the mitochondrial inner membrane that provide an increase in the surface area. Probably acts by forming helical filaments at the inside of inner membrane tubes with the shape and dimensions of crista junctions. In Gallus gallus (Chicken), this protein is Dynamin-like GTPase OPA1, mitochondrial.